The primary structure comprises 347 residues: Glycerol-1-phosphate dehydrogenase [NAD(P)+] (347 aa).

NAD(+) is bound by residues Gly94 to Asp98 and Thr116 to Ser119. Asp121 contributes to the substrate binding site. Ser125 is an NAD(+) binding site. Asp168 is a substrate binding site. The Zn(2+) site is built by Asp168 and His248. Residue His252 participates in substrate binding. His264 contributes to the Zn(2+) binding site.

It belongs to the glycerol-1-phosphate dehydrogenase family. In terms of assembly, homooctamer. Zn(2+) is required as a cofactor.

It localises to the cytoplasm. The enzyme catalyses sn-glycerol 1-phosphate + NAD(+) = dihydroxyacetone phosphate + NADH + H(+). The catalysed reaction is sn-glycerol 1-phosphate + NADP(+) = dihydroxyacetone phosphate + NADPH + H(+). The protein operates within membrane lipid metabolism; glycerophospholipid metabolism. Its activity is regulated as follows. Partially inhibited by divalent metal cations such as Co(2+), Cu(2+) and Ni(2+). In terms of biological role, catalyzes the NAD(P)H-dependent reduction of dihydroxyacetonephosphate (DHAP or glycerone phosphate) to glycerol 1-phosphate (G1P). The G1P thus generated is used as the glycerophosphate backbone of phospholipids in the cellular membranes of Archaea. Is also able to catalyze the reverse reaction, i.e. the NAD(P)(+)-dependent oxidation of G1P but not of G3P. Is not active toward glycerol, dihydroxyacetone, glyceraldehyde-3-phosphate, glyceraldehyde and glycerol-2-phosphate. This chain is Glycerol-1-phosphate dehydrogenase [NAD(P)+] (egsA), found in Methanothermobacter thermautotrophicus (strain ATCC 29096 / DSM 1053 / JCM 10044 / NBRC 100330 / Delta H) (Methanobacterium thermoautotrophicum).